The chain runs to 317 residues: Spore protein CgeB (317 aa).

Functionally, may be involved in maturation of the outermost layer of the spore. May act as a glycosyltransferase that contributes to the glycosylation state of the spore. This chain is Spore protein CgeB, found in Bacillus subtilis (strain 168).